A 455-amino-acid chain; its full sequence is Fez family zinc finger protein 2 (455 aa).

The disordered stretch occupies residues 1–22 (MASSASLETMVPPACPRAGASP). The Engrailed homology 1 repressor motif lies at 27-42 (TLAFSIERIMAKTSEP). 6 C2H2-type zinc fingers span residues 272–294 (FTCE…MPVH), 300–322 (FVCK…KIIH), 328–350 (HKCN…IRIH), 356–378 (FVCE…KLTH), 384–406 (YKCT…MHTH), and 412–435 (FTCA…RKLH).

It belongs to the krueppel C2H2-type zinc-finger protein family. Highly expressed in neocortical layer V, moderately expressed in layer VI. Expressed in subcortically projecting neurons.

The protein resides in the nucleus. Functionally, transcription repressor. Required for the specification of corticospinal motor neurons and other subcerebral projection neurons. May play a role in layer and neuronal subtype-specific patterning of subcortical projections and axonal fasciculation. Controls the development of dendritic arborization and spines of large layer V pyramidal neurons. Plays a role in rostro-caudal patterning of the diencephalon and in prethalamic formation. In Mus musculus (Mouse), this protein is Fez family zinc finger protein 2 (Fezf2).